The chain runs to 346 residues: tRNA-specific 2-thiouridylase MnmA (346 aa).

6 to 13 (AMSGGTDS) is an ATP binding site. The active-site Nucleophile is cysteine 90. Cysteine 90 and cysteine 187 are disulfide-bonded. Glycine 114 is a binding site for ATP. The segment at 137 to 139 (KDQ) is interaction with tRNA. The Cysteine persulfide intermediate role is filled by cysteine 187. Residues 292-293 (RY) form an interaction with tRNA region.

The protein belongs to the MnmA/TRMU family.

The protein resides in the cytoplasm. The catalysed reaction is S-sulfanyl-L-cysteinyl-[protein] + uridine(34) in tRNA + AH2 + ATP = 2-thiouridine(34) in tRNA + L-cysteinyl-[protein] + A + AMP + diphosphate + H(+). Functionally, catalyzes the 2-thiolation of uridine at the wobble position (U34) of tRNA, leading to the formation of s(2)U34. The chain is tRNA-specific 2-thiouridylase MnmA from Nitratidesulfovibrio vulgaris (strain DP4) (Desulfovibrio vulgaris).